Here is a 427-residue protein sequence, read N- to C-terminus: Trigger factor (427 aa).

One can recognise a PPIase FKBP-type domain in the interval 163–248; that stretch reads GDTVVIDFVG…IHEVKTKEVP (86 aa).

This sequence belongs to the FKBP-type PPIase family. Tig subfamily.

The protein resides in the cytoplasm. The catalysed reaction is [protein]-peptidylproline (omega=180) = [protein]-peptidylproline (omega=0). Involved in protein export. Acts as a chaperone by maintaining the newly synthesized protein in an open conformation. Functions as a peptidyl-prolyl cis-trans isomerase. The chain is Trigger factor (tig) from Streptococcus pyogenes serotype M1.